Reading from the N-terminus, the 258-residue chain is MLVLYGHSTQDLPETNARVVGGTEAGRNSWPSQISLQYRSGGSRYHTCGGTLIRQNWVMTAAHCVDYQKTFRVVAGDHNLSQNDGTEQYVSVQKIVVHPYWNSDNVAAGYDIALLRLAQSVTLNSYVQLGVLPQEGAILANNSPCYITGWGKTKTNGQLAQTLQQAYLPSVDYAICSSSSYWGSTVKNTMVCAGGDGVRSGCQGDSGGPLHCLVNGKYSVHGVTSFVSSRGCNVSRKPTVFTQVSAYISWINNVIASN.

A signal peptide spans 1 to 8; the sequence is MLVLYGHS. The propeptide at 9 to 18 is activation peptide; that stretch reads TQDLPETNAR. The 238-residue stretch at 19-256 folds into the Peptidase S1 domain; the sequence is VVGGTEAGRN…YISWINNVIA (238 aa). C48 and C64 are oxidised to a cystine. H63 functions as the Charge relay system in the catalytic mechanism. Ca(2+) is bound by residues D77, N79, Q82, and E87. N-linked (GlcNAc...) asparagine glycosylation occurs at N79. The active-site Charge relay system is D111. Intrachain disulfides connect C145-C212, C176-C192, and C202-C232. The active-site Charge relay system is S206. A glycan (N-linked (GlcNAc...) asparagine) is linked at N233.

Belongs to the peptidase S1 family. Elastase subfamily. Ca(2+) serves as cofactor. Basal layers of epidermis (at protein level). Not expressed in the pancreas.

It is found in the secreted. It carries out the reaction Hydrolysis of proteins, including elastin. Preferential cleavage: Ala-|-Xaa.. In terms of biological role, serine proteases that hydrolyze many proteins in addition to elastin. The polypeptide is Chymotrypsin-like elastase family member 1 (CELA1) (Homo sapiens (Human)).